The following is a 304-amino-acid chain: HTH-type transcriptional regulator AdmX (304 aa).

Positions 1–58 (MKLRHLEIFYTVMTCGSLSRAAESLNISQPAASKSLKNAELKLGFKLFQRVRGKLLPS) constitute an HTH lysR-type domain. The H-T-H motif DNA-binding region spans 18-37 (LSRAAESLNISQPAASKSLK).

The protein belongs to the LysR transcriptional regulatory family.

It is found in the cytoplasm. AdmX-mediated transcription is inhibited by indole-3-acetic and indole-3-pyruvic acids. AdmX recognizes and binds the auxin indole-3-acetic acid (IAA), which causes conformational changes in AdmX that result in the inhibition of the expression of the andrimid gene cluster and the suppression of antibiotic production. It also recognizes indole-3-pyruvic acid (IPA), an intermediate of the main IAA biosynthetic pathway in plants and plant beneficial bacteria, which also prevents andrimid synthesis, but to a much lesser extent. In terms of biological role, positively regulates the biosynthesis of andrimid, a broad-spectrum antibiotic, by activating the expression of the adm biosynthetic gene cluster. It specifically binds to a region within the adm promoter. This chain is HTH-type transcriptional regulator AdmX, found in Serratia plymuthica.